The following is a 192-amino-acid chain: UPF0149 protein YgfB (192 aa).

This sequence belongs to the UPF0149 family.

The chain is UPF0149 protein YgfB from Salmonella typhi.